Consider the following 89-residue polypeptide: Small ribosomal subunit protein uS15 (89 aa).

This sequence belongs to the universal ribosomal protein uS15 family. As to quaternary structure, part of the 30S ribosomal subunit. Forms a bridge to the 50S subunit in the 70S ribosome, contacting the 23S rRNA.

In terms of biological role, one of the primary rRNA binding proteins, it binds directly to 16S rRNA where it helps nucleate assembly of the platform of the 30S subunit by binding and bridging several RNA helices of the 16S rRNA. Its function is as follows. Forms an intersubunit bridge (bridge B4) with the 23S rRNA of the 50S subunit in the ribosome. The chain is Small ribosomal subunit protein uS15 from Parvibaculum lavamentivorans (strain DS-1 / DSM 13023 / NCIMB 13966).